We begin with the raw amino-acid sequence, 511 residues long: MMKMRWLGAAIMLTLYASSSWAFSIDDVAKQAQSLAGKGYEAPKSNLPSVFRDMKYADYQQIQFNSDKAYWNNLKTPFKLEFYHQGMYFDTPVKINEVTATTVKRIKYSPDYFNFGNVQHDKDTVKDLGFAGFKVLYPINSKDKNDEIVSMLGASYFRVIGAGQVYGLSARGLAIDTALPSGEEFPRFREFWIERPKPTDKRLTVYALLDSPRATGAYRFVIIPGRDTVVDVQSKVYLRDKVGKLGVAPLTSMFLFGPNQPSPTTNYRPELHDSNGLSIHAGNGEWIWRPLNNPKHLAVSSYAMENPQGFGLLQRGREFSRFEDLDDRYDLRPSAWITPKGDWGKGKVELVEIPTNDETNDNIVAYWTPDQLPEPGKEMNFKYTLTFSRDEDKLHAPDNAWVLQTRRSTGDVKQSNLIRQPDGTIAFVVDFVGADMKKLPPDTPVAAQTSIGDNGEIVDSNVRYNPVTKGWRLMLRVKVKDAKKTTEMRAALVNADQTLSETWSYQLPANE.

A signal peptide spans 1 to 22 (MMKMRWLGAAIMLTLYASSSWA).

This sequence belongs to the OpgD/OpgG family.

It is found in the periplasm. It functions in the pathway glycan metabolism; osmoregulated periplasmic glucan (OPG) biosynthesis. Its function is as follows. Involved in the biosynthesis of osmoregulated periplasmic glucans (OPGs). The polypeptide is Glucans biosynthesis protein G (Salmonella enteritidis PT4 (strain P125109)).